Reading from the N-terminus, the 262-residue chain is Acyl-[acyl-carrier-protein]--UDP-N-acetylglucosamine O-acyltransferase (262 aa).

It belongs to the transferase hexapeptide repeat family. LpxA subfamily. As to quaternary structure, homotrimer.

It is found in the cytoplasm. The enzyme catalyses a (3R)-hydroxyacyl-[ACP] + UDP-N-acetyl-alpha-D-glucosamine = a UDP-3-O-[(3R)-3-hydroxyacyl]-N-acetyl-alpha-D-glucosamine + holo-[ACP]. Its pathway is glycolipid biosynthesis; lipid IV(A) biosynthesis; lipid IV(A) from (3R)-3-hydroxytetradecanoyl-[acyl-carrier-protein] and UDP-N-acetyl-alpha-D-glucosamine: step 1/6. Its function is as follows. Involved in the biosynthesis of lipid A, a phosphorylated glycolipid that anchors the lipopolysaccharide to the outer membrane of the cell. The sequence is that of Acyl-[acyl-carrier-protein]--UDP-N-acetylglucosamine O-acyltransferase from Burkholderia ambifaria (strain MC40-6).